The chain runs to 155 residues: Small ribosomal subunit protein uS7c (155 aa).

This sequence belongs to the universal ribosomal protein uS7 family. In terms of assembly, part of the 30S ribosomal subunit.

The protein localises to the plastid. Its subcellular location is the chloroplast. One of the primary rRNA binding proteins, it binds directly to 16S rRNA where it nucleates assembly of the head domain of the 30S subunit. This is Small ribosomal subunit protein uS7c (rps7) from Houttuynia cordata (Chameleon plant).